The following is a 450-amino-acid chain: Probable ECA polymerase (450 aa).

Transmembrane regions (helical) follow at residues 6-26 (FSGLFVVWLLCTLFIATLTWF), 37-57 (VFFSLLFLLTFFFGFPLTSVL), 63-83 (VGVAPPEILLQALLSAGCFYA), 118-138 (VILMGIALVSVGIFFMHNGFL), 155-175 (GVALKRFFYFFIPAMLVVYFL), 181-201 (AWLFFLVSTVAFGLLTYMIVG), 207-227 (IIIAFAIFLFIGIIRGWISLW), 228-248 (MLAAAGVLGIVGMFWLALKRY), 341-361 (LVVMGGALFIPLGAIVVGLII), 378-398 (YKAAILHSFCFGAIFNMIVLA), and 410-430 (VFFIVVFGACLMIAKLLYWLF).

It belongs to the WzyE family. As to quaternary structure, probably part of a complex composed of WzxE, WzyE and WzzE.

The protein resides in the cell inner membrane. The protein operates within bacterial outer membrane biogenesis; enterobacterial common antigen biosynthesis. Its function is as follows. Probably involved in the polymerization of enterobacterial common antigen (ECA) trisaccharide repeat units. The sequence is that of Probable ECA polymerase from Escherichia coli O139:H28 (strain E24377A / ETEC).